The following is a 227-amino-acid chain: Testis expressed protein 56 (227 aa).

Expressed predominantly in the testis.

This Mus musculus (Mouse) protein is Testis expressed protein 56.